We begin with the raw amino-acid sequence, 268 residues long: Mediator of RNA polymerase II transcription subunit 18 (268 aa).

This sequence belongs to the Mediator complex subunit 18 family. As to quaternary structure, component of the Mediator complex.

The protein resides in the nucleus. Its function is as follows. Component of the Mediator complex, a coactivator involved in the regulated transcription of nearly all RNA polymerase II-dependent genes. Mediator functions as a bridge to convey information from gene-specific regulatory proteins to the basal RNA polymerase II transcription machinery. Mediator is recruited to promoters by direct interactions with regulatory proteins and serves as a scaffold for the assembly of a functional preinitiation complex with RNA polymerase II and the general transcription factors. The chain is Mediator of RNA polymerase II transcription subunit 18 (srb5) from Neosartorya fischeri (strain ATCC 1020 / DSM 3700 / CBS 544.65 / FGSC A1164 / JCM 1740 / NRRL 181 / WB 181) (Aspergillus fischerianus).